A 1178-amino-acid polypeptide reads, in one-letter code: DNA-directed RNA polymerase subunit beta' (1178 aa).

The Zn(2+) site is built by Cys-60, Cys-62, Cys-75, and Cys-78. 3 residues coordinate Mg(2+): Asp-450, Asp-452, and Asp-454. Cys-795, Cys-869, Cys-876, and Cys-879 together coordinate Zn(2+).

Belongs to the RNA polymerase beta' chain family. As to quaternary structure, the RNAP catalytic core consists of 2 alpha, 1 beta, 1 beta' and 1 omega subunit. When a sigma factor is associated with the core the holoenzyme is formed, which can initiate transcription. The cofactor is Mg(2+). Zn(2+) is required as a cofactor.

The catalysed reaction is RNA(n) + a ribonucleoside 5'-triphosphate = RNA(n+1) + diphosphate. DNA-dependent RNA polymerase catalyzes the transcription of DNA into RNA using the four ribonucleoside triphosphates as substrates. The sequence is that of DNA-directed RNA polymerase subunit beta' from Clostridium botulinum (strain Langeland / NCTC 10281 / Type F).